Here is a 93-residue protein sequence, read N- to C-terminus: Large ribosomal subunit protein uL23cz/uL23cy (93 aa).

This sequence belongs to the universal ribosomal protein uL23 family. In terms of assembly, part of the 50S ribosomal subunit.

The protein localises to the plastid. It localises to the chloroplast. Its function is as follows. Binds to 23S rRNA. The chain is Large ribosomal subunit protein uL23cz/uL23cy (rpl23-A) from Citrus sinensis (Sweet orange).